Consider the following 343-residue polypeptide: L-threonine 3-dehydrogenase (343 aa).

Residue C40 participates in Zn(2+) binding. Residues T42 and H45 each act as charge relay system in the active site. Zn(2+) contacts are provided by H65, E66, C95, C98, C101, and C109. NAD(+)-binding positions include I177, D197, R202, 264 to 266 (LGI), and 288 to 289 (IY).

The protein belongs to the zinc-containing alcohol dehydrogenase family. In terms of assembly, homotetramer. The cofactor is Zn(2+).

Its subcellular location is the cytoplasm. It catalyses the reaction L-threonine + NAD(+) = (2S)-2-amino-3-oxobutanoate + NADH + H(+). Its pathway is amino-acid degradation; L-threonine degradation via oxydo-reductase pathway; glycine from L-threonine: step 1/2. Catalyzes the NAD(+)-dependent oxidation of L-threonine to 2-amino-3-ketobutyrate. This chain is L-threonine 3-dehydrogenase, found in Vibrio atlanticus (strain LGP32) (Vibrio splendidus (strain Mel32)).